The chain runs to 1066 residues: Isoleucine--tRNA ligase (1066 aa).

A 'HIGH' region motif is present at residues 49 to 59 (PYVSGAIHLGT). The 'KMSKS' region signature appears at 625–629 (KMSKS). K628 lines the ATP pocket.

Belongs to the class-I aminoacyl-tRNA synthetase family. IleS type 2 subfamily. In terms of assembly, monomer. Zn(2+) serves as cofactor.

The protein resides in the cytoplasm. The catalysed reaction is tRNA(Ile) + L-isoleucine + ATP = L-isoleucyl-tRNA(Ile) + AMP + diphosphate. Functionally, catalyzes the attachment of isoleucine to tRNA(Ile). As IleRS can inadvertently accommodate and process structurally similar amino acids such as valine, to avoid such errors it has two additional distinct tRNA(Ile)-dependent editing activities. One activity is designated as 'pretransfer' editing and involves the hydrolysis of activated Val-AMP. The other activity is designated 'posttransfer' editing and involves deacylation of mischarged Val-tRNA(Ile). The protein is Isoleucine--tRNA ligase of Pyrococcus horikoshii (strain ATCC 700860 / DSM 12428 / JCM 9974 / NBRC 100139 / OT-3).